A 460-amino-acid polypeptide reads, in one-letter code: Chromosomal replication initiator protein DnaA (460 aa).

The tract at residues 1 to 84 is domain I, interacts with DnaA modulators; it reads MAVSLWQQCI…RFDIGSRPSA (84 aa). The domain II stretch occupies residues 84–123; that stretch reads AKKPEPAPVAAVRVPNPQTKASVGTSFNTTEPVVNANHRS. A domain III, AAA+ region region spans residues 124-340; the sequence is NINPTYQFDN…GALNRVIANA (217 aa). Residues Gly168, Gly170, Lys171, and Thr172 each contribute to the ATP site. Residues 341–460 form a domain IV, binds dsDNA region; that stretch reads NFTGRPITID…YANLIRTLSS (120 aa).

Belongs to the DnaA family. Oligomerizes as a right-handed, spiral filament on DNA at oriC.

Its subcellular location is the cytoplasm. Functionally, plays an essential role in the initiation and regulation of chromosomal replication. ATP-DnaA binds to the origin of replication (oriC) to initiate formation of the DNA replication initiation complex once per cell cycle. Binds the DnaA box (a 9 base pair repeat at the origin) and separates the double-stranded (ds)DNA. Forms a right-handed helical filament on oriC DNA; dsDNA binds to the exterior of the filament while single-stranded (ss)DNA is stabiized in the filament's interior. The ATP-DnaA-oriC complex binds and stabilizes one strand of the AT-rich DNA unwinding element (DUE), permitting loading of DNA polymerase. After initiation quickly degrades to an ADP-DnaA complex that is not apt for DNA replication. Binds acidic phospholipids. The chain is Chromosomal replication initiator protein DnaA from Shewanella sp. (strain MR-7).